Consider the following 1257-residue polypeptide: Elongation factor 2 (1257 aa).

The DOD-type homing endonuclease domain occupies 273–402 (LAGLMFGDGC…LQLLLQKFDV (130 aa)). One can recognise a tr-type G domain in the interval 541–782 (VEEHHNFAAE…MVVKHLPDPV (242 aa)). Residues 616-620 (DTPGH) and 670-673 (NKVD) contribute to the GTP site. H1120 is modified (diphthamide). The segment covering 1237–1250 (ERKGLKPEPPKPED) has biased composition (basic and acidic residues). The disordered stretch occupies residues 1237–1257 (ERKGLKPEPPKPEDYIEDYGG).

This sequence belongs to the TRAFAC class translation factor GTPase superfamily. Classic translation factor GTPase family. EF-G/EF-2 subfamily. Post-translationally, this protein undergoes a protein self splicing that involves a post-translational excision of the intervening region (intein) followed by peptide ligation.

It is found in the cytoplasm. Catalyzes the GTP-dependent ribosomal translocation step during translation elongation. During this step, the ribosome changes from the pre-translocational (PRE) to the post-translocational (POST) state as the newly formed A-site-bound peptidyl-tRNA and P-site-bound deacylated tRNA move to the P and E sites, respectively. Catalyzes the coordinated movement of the two tRNA molecules, the mRNA and conformational changes in the ribosome. The sequence is that of Elongation factor 2 from Methanopyrus kandleri (strain AV19 / DSM 6324 / JCM 9639 / NBRC 100938).